A 604-amino-acid polypeptide reads, in one-letter code: uncharacterized protein (604 aa).

Residues 1–40 (MWLQQRIKVFPGLLSSSWARRVLAVSGFLVIIYWYIFSGS) form the signal peptide. The Extracellular segment spans residues 41 to 563 (HYRSFWYSGK…EEHMAKQYRG (523 aa)). A glycan (N-linked (GlcNAc...) asparagine) is linked at asparagine 337. A helical transmembrane segment spans residues 564 to 584 (LPFLFWFSVASLITLFHLFLF). The Cytoplasmic portion of the chain corresponds to 585–604 (KLIYNEYCGPGAKPLFRSKV).

It is found in the membrane. This is an uncharacterized protein from Xenopus laevis (African clawed frog).